Consider the following 413-residue polypeptide: Aspartate aminotransferase, cytoplasmic (413 aa).

L-aspartate contacts are provided by glycine 39, tryptophan 141, and asparagine 195. Lysine 259 carries the post-translational modification N6-(pyridoxal phosphate)lysine. Arginine 387 lines the L-aspartate pocket.

It belongs to the class-I pyridoxal-phosphate-dependent aminotransferase family. Homodimer. It depends on pyridoxal 5'-phosphate as a cofactor.

It is found in the cytoplasm. The enzyme catalyses L-aspartate + 2-oxoglutarate = oxaloacetate + L-glutamate. It catalyses the reaction L-cysteine + 2-oxoglutarate = 2-oxo-3-sulfanylpropanoate + L-glutamate. The catalysed reaction is (2S)-2-aminobutanoate + 2-oxoglutarate = 2-oxobutanoate + L-glutamate. It carries out the reaction 3-sulfino-L-alanine + 2-oxoglutarate = 3-sulfinopyruvate + L-glutamate. Its function is as follows. Biosynthesis of L-glutamate from L-aspartate or L-cysteine. Important regulator of levels of glutamate, the major excitatory neurotransmitter of the vertebrate central nervous system. Acts as a scavenger of glutamate in brain neuroprotection. The aspartate aminotransferase activity is involved in hepatic glucose synthesis during development and in adipocyte glyceroneogenesis. Using L-cysteine as substrate, regulates levels of mercaptopyruvate, an important source of hydrogen sulfide. Mercaptopyruvate is converted into H(2)S via the action of 3-mercaptopyruvate sulfurtransferase (3MST). Hydrogen sulfide is an important synaptic modulator and neuroprotectant in the brain. This chain is Aspartate aminotransferase, cytoplasmic, found in Bos taurus (Bovine).